The chain runs to 274 residues: MILTPIRRYGAMILMLLTLVFSSEVLAKTHTTTASQKSHLTKASNKQVSSKQEYSRNSAKSSSLPDLRKYPSGTPRKKAFLRTVMPYITSQNAAITAERNWLISKQYQGQWSPAERARLKDIAKRYKVKWSGNTRKIPWNTLLERVDIIPTSMVATMAAAESGWGTSKLARNNNNLFGMKCMKGRCTNAPGKVKGYSQFSSVKESVSAYVTNLNTHPAYSSFRKSRAQLRKADQEVTATAMIHKLKGYSTKGKSYNNYLFAMYQDNQRLIAAHM.

Residues 32-64 are compositionally biased toward polar residues; it reads TTASQKSHLTKASNKQVSSKQEYSRNSAKSSSL. Residues 32–74 are disordered; it reads TTASQKSHLTKASNKQVSSKQEYSRNSAKSSSLPDLRKYPSGT. 247–254 lines the ATP pocket; the sequence is GYSTKGKS.

The polypeptide is Protein bax (bax) (Escherichia coli (strain K12)).